A 504-amino-acid polypeptide reads, in one-letter code: ATP synthase subunit beta (504 aa).

181–188 serves as a coordination point for ATP; it reads GGAGVGKT.

This sequence belongs to the ATPase alpha/beta chains family. F-type ATPases have 2 components, CF(1) - the catalytic core - and CF(0) - the membrane proton channel. CF(1) has five subunits: alpha(3), beta(3), gamma(1), delta(1), epsilon(1). CF(0) has three main subunits: a(1), b(2) and c(9-12). The alpha and beta chains form an alternating ring which encloses part of the gamma chain. CF(1) is attached to CF(0) by a central stalk formed by the gamma and epsilon chains, while a peripheral stalk is formed by the delta and b chains.

Its subcellular location is the cell inner membrane. The catalysed reaction is ATP + H2O + 4 H(+)(in) = ADP + phosphate + 5 H(+)(out). Produces ATP from ADP in the presence of a proton gradient across the membrane. The catalytic sites are hosted primarily by the beta subunits. In Ehrlichia ruminantium (strain Welgevonden), this protein is ATP synthase subunit beta.